We begin with the raw amino-acid sequence, 171 residues long: S-ribosylhomocysteine lyase (171 aa).

3 residues coordinate Fe cation: His54, His58, and Cys128.

It belongs to the LuxS family. In terms of assembly, homodimer. The cofactor is Fe cation.

The enzyme catalyses S-(5-deoxy-D-ribos-5-yl)-L-homocysteine = (S)-4,5-dihydroxypentane-2,3-dione + L-homocysteine. Involved in the synthesis of autoinducer 2 (AI-2) which is secreted by bacteria and is used to communicate both the cell density and the metabolic potential of the environment. The regulation of gene expression in response to changes in cell density is called quorum sensing. Catalyzes the transformation of S-ribosylhomocysteine (RHC) to homocysteine (HC) and 4,5-dihydroxy-2,3-pentadione (DPD). The polypeptide is S-ribosylhomocysteine lyase (Yersinia enterocolitica serotype O:8 / biotype 1B (strain NCTC 13174 / 8081)).